Here is a 154-residue protein sequence, read N- to C-terminus: MGLSDGEWQLVLNVWGKVEADLGGHGQEVLIRLFKGHPETLEKFDKFKHLKAEDEMRASEDLKKHGTTVLTALGGILKKRGQHAAELAPLAQSHATKHKIPVKYLEFISEAIIQVLQSKHPGDFGADAQAAMSKALELFRNDIAAKYKELGFQG.

The Globin domain maps to 2-148; sequence GLSDGEWQLV…FRNDIAAKYK (147 aa). The residue at position 4 (Ser-4) is a Phosphoserine. His-65 contacts nitrite. His-65 is a binding site for O2. A Phosphothreonine modification is found at Thr-68. His-94 is a heme b binding site.

Belongs to the globin family. In terms of assembly, monomeric.

The protein resides in the cytoplasm. The protein localises to the sarcoplasm. The enzyme catalyses Fe(III)-heme b-[protein] + nitric oxide + H2O = Fe(II)-heme b-[protein] + nitrite + 2 H(+). It carries out the reaction H2O2 + AH2 = A + 2 H2O. Its function is as follows. Monomeric heme protein which primary function is to store oxygen and facilitate its diffusion within muscle tissues. Reversibly binds oxygen through a pentacoordinated heme iron and enables its timely and efficient release as needed during periods of heightened demand. Depending on the oxidative conditions of tissues and cells, and in addition to its ability to bind oxygen, it also has a nitrite reductase activity whereby it regulates the production of bioactive nitric oxide. Under stress conditions, like hypoxia and anoxia, it also protects cells against reactive oxygen species thanks to its pseudoperoxidase activity. The protein is Myoglobin (MB) of Lagostomus maximus (Plains viscacha).